The sequence spans 418 residues: MNIFEELKARGLVFQTTDEQALVKALTEGQVSYYTGYDPTADSLHLGHLVAILTSRRLQLAGHKPYALVGGATGLIGDPSFKDAERSLQTKETVLEWSDKIKGQLSTFLDFENGDNKAELVNNYDWFSQISFIDFLRDVGKYFTVNYMMSKDSVKKRIETGISYTEFAYQIMQGYDFYELNDKHNVTLQIGGSDQWGNMTAGTELLRKKADKTGHVMTVPLITDSTGKKFGKSEGNAVWLDADKTSPYEMYQFWLNVMDDDAVRFLKIFTFLSLDEIAEIESQFNAARHERLAQKTLAREVVTLVHGEEAYKQALNITEQLFAGNIKNLSANELKQGLSNVPNYHVQSEDSLNLVDMLVTAGISPSKRQAREDVQNGAIYINGDRIQDLDYQLSNDDKIDDQLTVIRRGKKKYAVLTY.

Tyr-34 is a binding site for L-tyrosine. Positions 39-48 (PTADSLHLGH) match the 'HIGH' region motif. L-tyrosine is bound by residues Tyr-169 and Gln-173. The 'KMSKS' region signature appears at 229 to 233 (KFGKS). An ATP-binding site is contributed by Lys-232. Positions 352–418 (LNLVDMLVTA…GKKKYAVLTY (67 aa)) constitute an S4 RNA-binding domain.

The protein belongs to the class-I aminoacyl-tRNA synthetase family. TyrS type 1 subfamily. As to quaternary structure, homodimer.

The protein localises to the cytoplasm. It carries out the reaction tRNA(Tyr) + L-tyrosine + ATP = L-tyrosyl-tRNA(Tyr) + AMP + diphosphate + H(+). In terms of biological role, catalyzes the attachment of tyrosine to tRNA(Tyr) in a two-step reaction: tyrosine is first activated by ATP to form Tyr-AMP and then transferred to the acceptor end of tRNA(Tyr). In Streptococcus pyogenes serotype M3 (strain SSI-1), this protein is Tyrosine--tRNA ligase.